The chain runs to 235 residues: Ion-translocating oxidoreductase complex subunit E (235 aa).

A run of 5 helical transmembrane segments spans residues 63-83, 93-113, 117-137, 152-172, and 206-226; these read LGLG…ISLF, IPIY…LMNA, TLYQ…IIIG, IWDG…LGAL, and SFLL…LLAI.

Belongs to the NqrDE/RnfAE family. In terms of assembly, the complex is composed of six subunits: RnfA, RnfB, RnfC, RnfD, RnfE and RnfG.

The protein localises to the cell inner membrane. Its function is as follows. Part of a membrane-bound complex that couples electron transfer with translocation of ions across the membrane. The chain is Ion-translocating oxidoreductase complex subunit E from Haemophilus influenzae (strain 86-028NP).